The following is a 492-amino-acid chain: Regulatory protein ViaA (492 aa).

This sequence belongs to the ViaA family. In terms of assembly, homodimer. Interacts with RavA.

The protein localises to the cytoplasm. Component of the RavA-ViaA chaperone complex, which may act on the membrane to optimize the function of some of the respiratory chains. ViaA stimulates the ATPase activity of RavA. The chain is Regulatory protein ViaA from Pectobacterium carotovorum subsp. carotovorum (strain PC1).